The chain runs to 308 residues: MSWLEKILEKSNIVSSRKASIPEGVWTKCTSCEQVLYYAELERNLEVCPKCDHHMRMKARRRLETFLDQGERVELGEELEPQDKLKFKDSKRYKERLAAAQKASGEKDALVVMKGAVLGVPVVACAFEFSFMGGSMGSVVGARFVRAVEAAMEHNCGLICFSASGGARMQEALMSLMQMAKTSAALERLSDKGLPFISVMTDPTMGGVSASLAMLGDINIGEPKALIGFAGRRVIEQTVREELPEGFQRSEFLLEHGAIDMIVDRRDMRQRVASLLAKMTGQASPLVVSVNDAPNEAPYAVPEANKKG.

The region spanning 25–294 is the CoA carboxyltransferase N-terminal domain; sequence VWTKCTSCEQ…PLVVSVNDAP (270 aa). Zn(2+) contacts are provided by Cys-29, Cys-32, Cys-48, and Cys-51. Residues 29 to 51 form a C4-type zinc finger; sequence CTSCEQVLYYAELERNLEVCPKC.

This sequence belongs to the AccD/PCCB family. As to quaternary structure, acetyl-CoA carboxylase is a heterohexamer composed of biotin carboxyl carrier protein (AccB), biotin carboxylase (AccC) and two subunits each of ACCase subunit alpha (AccA) and ACCase subunit beta (AccD). It depends on Zn(2+) as a cofactor.

The protein localises to the cytoplasm. It catalyses the reaction N(6)-carboxybiotinyl-L-lysyl-[protein] + acetyl-CoA = N(6)-biotinyl-L-lysyl-[protein] + malonyl-CoA. The protein operates within lipid metabolism; malonyl-CoA biosynthesis; malonyl-CoA from acetyl-CoA: step 1/1. In terms of biological role, component of the acetyl coenzyme A carboxylase (ACC) complex. Biotin carboxylase (BC) catalyzes the carboxylation of biotin on its carrier protein (BCCP) and then the CO(2) group is transferred by the transcarboxylase to acetyl-CoA to form malonyl-CoA. The polypeptide is Acetyl-coenzyme A carboxylase carboxyl transferase subunit beta (Vibrio cholerae serotype O1 (strain ATCC 39541 / Classical Ogawa 395 / O395)).